Reading from the N-terminus, the 306-residue chain is Homoserine kinase (306 aa).

84–94 (PAGLGLGSSGA) contributes to the ATP binding site.

It belongs to the GHMP kinase family. Homoserine kinase subfamily.

It localises to the cytoplasm. The catalysed reaction is L-homoserine + ATP = O-phospho-L-homoserine + ADP + H(+). The protein operates within amino-acid biosynthesis; L-threonine biosynthesis; L-threonine from L-aspartate: step 4/5. In terms of biological role, catalyzes the ATP-dependent phosphorylation of L-homoserine to L-homoserine phosphate. The protein is Homoserine kinase of Sulfurisphaera tokodaii (strain DSM 16993 / JCM 10545 / NBRC 100140 / 7) (Sulfolobus tokodaii).